A 323-amino-acid chain; its full sequence is Aldo-keto reductase family 1 member C21 (323 aa).

Position 20–24 (20–24) interacts with NADP(+); the sequence is GFGTA. Lys-31 is a binding site for substrate. Asp-50 contacts NADP(+). The Proton donor role is filled by Tyr-55. His-117 contacts substrate. NADP(+)-binding positions include 166 to 167, Gln-190, 216 to 224, and 270 to 280; these read SN, YGVLGTQRY, and TSLKEERIKEN.

It belongs to the aldo/keto reductase family. Monomer. Detected in kidney and brain.

The protein resides in the cytoplasm. It catalyses the reaction androsterone + NADP(+) = 5alpha-androstan-3,17-dione + NADPH + H(+). The catalysed reaction is androsterone + NAD(+) = 5alpha-androstan-3,17-dione + NADH + H(+). Inhibited by high concentrations of substrate. In terms of biological role, NADP-dependent 17-alpha-hydroxysteroid dehydrogenase that converts 5-alpha-androstane-3,17-dione into androsterone. Has lower 3-alpha-hydroxysteroid dehydrogenase activity. Has broad substrate specificity and acts on various 17-alpha-hydroxysteroids, 17-ketosteroids, 3-alpha hydroxysteroids and 3-ketosteroids. Reduction of keto groups is strictly stereoselective. Reduction of 17-ketosteroids yields only 17-alpha-hydroxysteroids. Likewise, reduction of 3-ketosteroids yields only 3-alpha-hydroxysteroids. The polypeptide is Aldo-keto reductase family 1 member C21 (Akr1c21) (Mus musculus (Mouse)).